A 367-amino-acid chain; its full sequence is Outer membrane protein assembly factor BamC (367 aa).

An N-terminal signal peptide occupies residues Met1–Gly16. The N-palmitoyl cysteine moiety is linked to residue Cys17. A lipid anchor (S-diacylglycerol cysteine) is attached at Cys17.

The protein belongs to the BamC family. In terms of assembly, part of the Bam complex.

It is found in the cell outer membrane. Functionally, part of the outer membrane protein assembly complex, which is involved in assembly and insertion of beta-barrel proteins into the outer membrane. The chain is Outer membrane protein assembly factor BamC from Thiobacillus denitrificans (strain ATCC 25259 / T1).